Here is a 223-residue protein sequence, read N- to C-terminus: Probable glutathione S-transferase (223 aa).

The GST N-terminal domain occupies Ala2–Ser81. Glutathione-binding positions include Ser12, Lys39, Val53, and Glu65–Ser66. The GST C-terminal domain maps to Asp86–Phe212.

The protein belongs to the GST superfamily. HSP26 family. In terms of tissue distribution, root tip-specific expression.

The catalysed reaction is RX + glutathione = an S-substituted glutathione + a halide anion + H(+). In Nicotiana tabacum (Common tobacco), this protein is Probable glutathione S-transferase.